The primary structure comprises 465 residues: Sodium-dependent phosphate transport protein 1 (465 aa).

N-linked (GlcNAc...) asparagine glycans are attached at residues asparagine 47 and asparagine 56. Helical transmembrane passes span glycine 79–isoleucine 99, isoleucine 109–valine 129, methionine 171–cysteine 191, methionine 198–tyrosine 218, alanine 255–threonine 275, leucine 304–methionine 324, leucine 337–serine 357, threonine 363–isoleucine 383, valine 399–leucine 419, and phenylalanine 428–phenylalanine 448.

Belongs to the major facilitator superfamily. Sodium/anion cotransporter family. Interacts with PDZK1. In terms of tissue distribution, kidney cortex and liver.

Its subcellular location is the apical cell membrane. It catalyses the reaction 3 Na(+)(out) + phosphate(out) = 3 Na(+)(in) + phosphate(in). The catalysed reaction is urate(out) = urate(in). Functionally, important for the resorption of phosphate by the kidney. May be involved in actively transporting phosphate into cells via Na(+) cotransport in the renal brush border membrane. Plays a role in urate transport in the kidney. This chain is Sodium-dependent phosphate transport protein 1 (SLC17A1), found in Oryctolagus cuniculus (Rabbit).